The sequence spans 152 residues: Interleukin-3 (152 aa).

A signal peptide spans 1-19 (MSRLPVLLLLQLLVRPGLQ). N-linked (GlcNAc...) asparagine glycans are attached at residues Asn-34 and Asn-89. Cys-35 and Cys-103 form a disulfide bridge.

It belongs to the IL-3 family. In terms of assembly, monomer. Activated T-cells, mast cells, natural killer cells.

The protein resides in the secreted. In terms of biological role, granulocyte/macrophage colony-stimulating factors are cytokines that act in hematopoiesis by controlling the production, differentiation, and function of 2 related white cell populations of the blood, the granulocytes and the monocytes-macrophages. Its function is as follows. This CSF induces granulocytes, macrophages, mast cells, stem cells, erythroid cells, eosinophils and megakaryocytes. The protein is Interleukin-3 (IL3) of Pan troglodytes (Chimpanzee).